The chain runs to 349 residues: Anthranilate phosphoribosyltransferase (349 aa).

Residues Gly-82, 85–86 (GD), 92–95 (NVST), 110–118 (KHGNRAVSG), and Ser-122 each bind 5-phospho-alpha-D-ribose 1-diphosphate. An anthranilate-binding site is contributed by Gly-82. A Mg(2+)-binding site is contributed by Ser-94. Residue Asn-113 coordinates anthranilate. Position 168 (Arg-168) interacts with anthranilate. 2 residues coordinate Mg(2+): Asp-227 and Glu-228.

Belongs to the anthranilate phosphoribosyltransferase family. In terms of assembly, homodimer. It depends on Mg(2+) as a cofactor.

It carries out the reaction N-(5-phospho-beta-D-ribosyl)anthranilate + diphosphate = 5-phospho-alpha-D-ribose 1-diphosphate + anthranilate. It functions in the pathway amino-acid biosynthesis; L-tryptophan biosynthesis; L-tryptophan from chorismate: step 2/5. Functionally, catalyzes the transfer of the phosphoribosyl group of 5-phosphorylribose-1-pyrophosphate (PRPP) to anthranilate to yield N-(5'-phosphoribosyl)-anthranilate (PRA). This Pseudomonas putida (Arthrobacter siderocapsulatus) protein is Anthranilate phosphoribosyltransferase.